Here is a 407-residue protein sequence, read N- to C-terminus: Imidazolonepropionase (407 aa).

Positions 68 and 70 each coordinate Fe(3+). Zn(2+) is bound by residues H68 and H70. 4-imidazolone-5-propanoate-binding residues include R77, Y140, and H173. Position 140 (Y140) interacts with N-formimidoyl-L-glutamate. A Fe(3+)-binding site is contributed by H238. H238 lines the Zn(2+) pocket. Q241 serves as a coordination point for 4-imidazolone-5-propanoate. D313 serves as a coordination point for Fe(3+). Position 313 (D313) interacts with Zn(2+). N-formimidoyl-L-glutamate is bound by residues N315 and G317. T318 serves as a coordination point for 4-imidazolone-5-propanoate.

This sequence belongs to the metallo-dependent hydrolases superfamily. HutI family. Zn(2+) is required as a cofactor. Fe(3+) serves as cofactor.

The protein resides in the cytoplasm. It catalyses the reaction 4-imidazolone-5-propanoate + H2O = N-formimidoyl-L-glutamate. The protein operates within amino-acid degradation; L-histidine degradation into L-glutamate; N-formimidoyl-L-glutamate from L-histidine: step 3/3. Catalyzes the hydrolytic cleavage of the carbon-nitrogen bond in imidazolone-5-propanoate to yield N-formimidoyl-L-glutamate. It is the third step in the universal histidine degradation pathway. The chain is Imidazolonepropionase from Burkholderia orbicola (strain MC0-3).